Reading from the N-terminus, the 583-residue chain is Sensor protein SrrB (583 aa).

At 1-11 (MMSRLNSVVIK) the chain is on the cytoplasmic side. A helical transmembrane segment spans residues 12–32 (LWLTIILIVTTVLILLSIALI). At 33–174 (TFMQYYFTQE…SIEDTNNAIT (142 aa)) the chain is on the extracellular side. Residues 175 to 195 (IITIITAVIFLTITTVFAFFL) form a helical membrane-spanning segment. Residues 196–583 (SSRITKPLRR…TFIIKLPKPE (388 aa)) lie on the Cytoplasmic side of the membrane. The 53-residue stretch at 197-249 (SRITKPLRRLRDQATRVSEGDYSYKPSVTTKDEIGQLSQAFNQMSTEIEEHVD) folds into the HAMP domain. The Histidine kinase domain occupies 366–583 (NVSHELRTPI…TFIIKLPKPE (218 aa)). His369 carries the post-translational modification Phosphohistidine; by autocatalysis.

It localises to the cell membrane. The enzyme catalyses ATP + protein L-histidine = ADP + protein N-phospho-L-histidine.. In terms of biological role, member of the two-component regulatory system SrrA/SrrB, which is involved in the global regulation of staphylococcal virulence factors in response to environmental oxygen levels as well as biofilm formation. Also plays an essential role in host-derived nitric oxide resistance by regulating hmp/flavohemoglobin, an enzyme that detoxifies nitric oxide by converting it to nitrate. Functions as a sensor protein kinase which is autophosphorylated at a histidine residue and transfers its phosphate group to SrrA. In turn, SrrA binds to the upstream promoter regions of the target genes to positively and negatively regulate their expression. This chain is Sensor protein SrrB (srrB), found in Staphylococcus aureus (strain MW2).